The following is a 190-amino-acid chain: Inosine triphosphate pyrophosphatase (190 aa).

8–13 (TGNANK) is a binding site for ITP. Glutamate 37 serves as a coordination point for Mg(2+). ITP is bound by residues lysine 49, 65-66 (DT), lysine 82, 140-143 (FGWD), lysine 163, and 168-169 (HR).

It belongs to the HAM1 NTPase family. As to quaternary structure, homodimer. It depends on Mg(2+) as a cofactor. Mn(2+) serves as cofactor.

Its subcellular location is the cytoplasm. The protein localises to the nucleus. The enzyme catalyses ITP + H2O = IMP + diphosphate + H(+). It carries out the reaction dITP + H2O = dIMP + diphosphate + H(+). It catalyses the reaction XTP + H2O = XMP + diphosphate + H(+). Its function is as follows. Pyrophosphatase that hydrolyzes non-canonical purine nucleotides such as inosine triphosphate (ITP), deoxyinosine triphosphate (dITP) or xanthosine 5'-triphosphate (XTP) to their respective monophosphate derivatives. The enzyme does not distinguish between the deoxy- and ribose forms. Probably excludes non-canonical purines from RNA and DNA precursor pools, thus preventing their incorporation into RNA and DNA and avoiding chromosomal lesions. This is Inosine triphosphate pyrophosphatase from Batrachochytrium dendrobatidis (strain JAM81 / FGSC 10211) (Frog chytrid fungus).